The primary structure comprises 542 residues: LysM domain-containing protein ARB_00327 (542 aa).

Residues 1 to 35 form the signal peptide; the sequence is MLSSVLFPAMRTLLLLKYVFSLISLSAICCQTVSA. N-linked (GlcNAc...) asparagine glycosylation is found at Asn218, Asn298, Asn381, and Asn415. The LysM 1 domain maps to 264-310; the sequence is RWYGVKKGDYCNLIVLKFGITMDNFIFLNPALNSNCTNLYAEESYCV. The segment at 439 to 484 is disordered; it reads DSDEPTPTTPITTSDDPTSTSATPTTPTTSSKPSPGAPTMTGQPSA. Over residues 443 to 472 the composition is skewed to low complexity; that stretch reads PTPTTPITTSDDPTSTSATPTTPTTSSKPS. The LysM 2 domain occupies 487 to 534; it reads KWHTVTNGESCTVIPKTFGITLEQFLAWNPTVKSDCTENFWAGYAYCV.

It is found in the secreted. Might have a role in sequestration of chitin oligosaccharides (breakdown products of fungal cell walls that are released during invasion and act as triggers of host immunity) to dampen host defense. The sequence is that of LysM domain-containing protein ARB_00327 from Arthroderma benhamiae (strain ATCC MYA-4681 / CBS 112371) (Trichophyton mentagrophytes).